Consider the following 335-residue polypeptide: S-adenosylmethionine:tRNA ribosyltransferase-isomerase (335 aa).

Belongs to the QueA family. In terms of assembly, monomer.

It is found in the cytoplasm. The catalysed reaction is 7-aminomethyl-7-carbaguanosine(34) in tRNA + S-adenosyl-L-methionine = epoxyqueuosine(34) in tRNA + adenine + L-methionine + 2 H(+). Its pathway is tRNA modification; tRNA-queuosine biosynthesis. Transfers and isomerizes the ribose moiety from AdoMet to the 7-aminomethyl group of 7-deazaguanine (preQ1-tRNA) to give epoxyqueuosine (oQ-tRNA). In Thermotoga petrophila (strain ATCC BAA-488 / DSM 13995 / JCM 10881 / RKU-1), this protein is S-adenosylmethionine:tRNA ribosyltransferase-isomerase.